The following is a 162-amino-acid chain: Caveolin-2 (162 aa).

The Cytoplasmic portion of the chain corresponds to 1–86 (MGLETEKADV…FEISKYVIYK (86 aa)). The residue at position 19 (Tyr-19) is a Phosphotyrosine; by SRC. Phosphoserine is present on residues Ser-20 and Ser-23. Residue Tyr-27 is modified to Phosphotyrosine; by SRC. Position 36 is a phosphoserine (Ser-36). The segment at residues 87–107 (FLTLFLAIPLAFAAGILFATL) is an intramembrane region (helical). The Cytoplasmic segment spans residues 108 to 162 (SCLHIWIIMPFVKTCLMVLPSVQTIWKSITDVVIAPLCTSVGRSFSSVSLQLSHD).

It belongs to the caveolin family. Monomer or homodimer. Interacts with CAV1; the interaction forms a stable heterooligomeric complex that is required for targeting to lipid rafts and for caveolae formation. Tyrosine phosphorylated forms do not form heterooligomers with the Tyr-19-phosphorylated form existing as a monomer or dimer, and the Tyr-27-form as a monomer only. Interacts (tyrosine phosphorylated form) with the SH2 domain-containing proteins, RASA1, NCK1 and SRC. Interacts (tyrosine phosphorylated form) with INSR, the interaction (Tyr-27-phosphorylated form) is increased on insulin stimulation. Interacts (Tyr-19 phosphorylated form) with MAPK1 (phosphorylated form); the interaction, promoted by insulin, leads to nuclear location and MAPK1 activation. Interacts with STAT3; the interaction is increased on insulin-induced tyrosine phosphorylation leading to STAT activation. Post-translationally, phosphorylated on serine and tyrosine residues. CAV1 promotes phosphorylation on Ser-23 which then targets the complex to the plasma membrane, lipid rafts and caveolae. Phosphorylation on Ser-36 appears to modulate mitosis in endothelial cells. Phosphorylation on both Tyr-19 and Tyr-27 is required for insulin-induced 'Ser-727' phosphorylation of STAT3 and its activation. Phosphorylation on Tyr-19 is required for insulin-induced phosphorylation of MAPK1 and DNA binding of STAT3. Tyrosine phosphorylation is induced by both EGF and insulin (By. similarity).

The protein resides in the nucleus. Its subcellular location is the cytoplasm. The protein localises to the golgi apparatus membrane. It localises to the cell membrane. It is found in the membrane. The protein resides in the caveola. Its function is as follows. May act as a scaffolding protein within caveolar membranes. Interacts directly with G-protein alpha subunits and can functionally regulate their activity. Acts as an accessory protein in conjunction with CAV1 in targeting to lipid rafts and driving caveolae formation. The Ser-36 phosphorylated form has a role in modulating mitosis in endothelial cells. Positive regulator of cellular mitogenesis of the MAPK signaling pathway. Required for the insulin-stimulated nuclear translocation and activation of MAPK1 and STAT3, and the subsequent regulation of cell cycle progression. The protein is Caveolin-2 (CAV2) of Neofelis nebulosa (Clouded leopard).